The primary structure comprises 101 residues: MVGQAGHYRWQGEDLILHCQLQPKASGDDIVGVHGDRLKIRITAPPVDGKANEYLIKWLSKQFRVPKGNIKILQGELGRHKTLGIHAPRHLPEEAHICFPK.

Belongs to the UPF0235 family.

In Cellvibrio japonicus (strain Ueda107) (Pseudomonas fluorescens subsp. cellulosa), this protein is UPF0235 protein CJA_0091.